Consider the following 156-residue polypeptide: Keratin, high-sulfur matrix protein, B2B (156 aa).

The residue at position 1 (Ala1) is an N-acetylalanine. 4 repeats span residues 26-35 (PTCSQTSCCQ), 36-45 (PTSIQTSCCQ), 46-55 (PISIQTSCCQ), and 56-65 (PTCLQTSGCE).

Its function is as follows. The keratin products of mammalian epidermal derivatives such as wool and hair consist of microfibrils embedded in a rigid matrix of other proteins. The matrix proteins include the high-sulfur and high-tyrosine keratins, having molecular weights of 6-20 kDa, whereas the microfibrils contain the larger, low-sulfur keratins (40-56 kDa). This chain is Keratin, high-sulfur matrix protein, B2B, found in Ovis aries (Sheep).